Consider the following 103-residue polypeptide: Pyrimidine/purine nucleoside phosphorylase (103 aa).

The protein belongs to the nucleoside phosphorylase PpnP family.

The enzyme catalyses a purine D-ribonucleoside + phosphate = a purine nucleobase + alpha-D-ribose 1-phosphate. The catalysed reaction is adenosine + phosphate = alpha-D-ribose 1-phosphate + adenine. It carries out the reaction cytidine + phosphate = cytosine + alpha-D-ribose 1-phosphate. It catalyses the reaction guanosine + phosphate = alpha-D-ribose 1-phosphate + guanine. The enzyme catalyses inosine + phosphate = alpha-D-ribose 1-phosphate + hypoxanthine. The catalysed reaction is thymidine + phosphate = 2-deoxy-alpha-D-ribose 1-phosphate + thymine. It carries out the reaction uridine + phosphate = alpha-D-ribose 1-phosphate + uracil. It catalyses the reaction xanthosine + phosphate = alpha-D-ribose 1-phosphate + xanthine. Catalyzes the phosphorolysis of diverse nucleosides, yielding D-ribose 1-phosphate and the respective free bases. Can use uridine, adenosine, guanosine, cytidine, thymidine, inosine and xanthosine as substrates. Also catalyzes the reverse reactions. This is Pyrimidine/purine nucleoside phosphorylase from Nocardia farcinica (strain IFM 10152).